The sequence spans 328 residues: Integrator complex subunit 12 (328 aa).

The sufficient for binding to IntS1 and IntS9 and for 3'-end snRNA processing stretch occupies residues Met-1–Leu-45. A PHD-type zinc finger spans residues Asp-128 to Lys-185. 4 stretches are compositionally biased toward low complexity: residues Lys-215–Ser-233, Ser-241–Ser-264, Lys-274–Ala-283, and Ser-292–Ser-311. The disordered stretch occupies residues Lys-215–Gln-328.

Belongs to the Integrator subunit 12 family. As to quaternary structure, belongs to the multiprotein complex Integrator, at least composed of IntS1, IntS2, IntS3, IntS4, omd/IntS5, IntS6, defl/IntS7, IntS8, IntS9, IntS10, IntS11, IntS12, asun/IntS13, IntS14 and IntS15. The core complex associates with protein phosphatase 2A subunits mts/PP2A and Pp2A-29B, to form the Integrator-PP2A (INTAC) complex. Within the complex, interacts with IntS1 and IntS9. Interaction with IntS1 is likely to be important for promoting 3'-end processing of snRNAs.

It localises to the nucleus. In terms of biological role, component of the integrator complex, a multiprotein complex that terminates RNA polymerase II (Pol II) transcription in the promoter-proximal region of genes. The integrator complex provides a quality checkpoint during transcription elongation by driving premature transcription termination of transcripts that are unfavorably configured for transcriptional elongation: the complex terminates transcription by (1) catalyzing dephosphorylation of the C-terminal domain (CTD) of Pol II subunit Polr2A/Rbp1 and Spt5, and (2) degrading the exiting nascent RNA transcript via endonuclease activity. The integrator complex is also involved in the 3'-end processing of the U7 snRNA, and also the spliceosomal snRNAs U1, U2, U4 and U5. Required for the normal expression of the Integrator complex component IntS1. The polypeptide is Integrator complex subunit 12 (Drosophila melanogaster (Fruit fly)).